Here is a 38-residue protein sequence, read N- to C-terminus: Potassium channel toxin alpha-KTx 2.21 (38 aa).

Disulfide bonds link Cys7–Cys29, Cys13–Cys34, and Cys17–Cys36.

Expressed by the venom gland.

Its subcellular location is the secreted. Inhibits human voltage-gated potassium (Kv) channels Kv1.2/KCNA2 and Kv1.3/KCNA3. Does not block human Kv1.1/KCNA1 at 100nM concentration. The sequence is that of Potassium channel toxin alpha-KTx 2.21 from Centruroides bonito (Scorpion).